We begin with the raw amino-acid sequence, 347 residues long: Protein RecA (347 aa).

Position 65 to 72 (65 to 72) interacts with ATP; the sequence is GPESSGKT. Over residues 327–336 the composition is skewed to basic and acidic residues; that stretch reads KFEPTELSRE. The disordered stretch occupies residues 327–347; the sequence is KFEPTELSREEGDEDTLEDTM. The segment covering 337–347 has biased composition (acidic residues); it reads EGDEDTLEDTM.

The protein belongs to the RecA family.

Its subcellular location is the cytoplasm. In terms of biological role, can catalyze the hydrolysis of ATP in the presence of single-stranded DNA, the ATP-dependent uptake of single-stranded DNA by duplex DNA, and the ATP-dependent hybridization of homologous single-stranded DNAs. It interacts with LexA causing its activation and leading to its autocatalytic cleavage. The chain is Protein RecA from Xylella fastidiosa (strain 9a5c).